The following is a 149-amino-acid chain: Large ribosomal subunit protein bL9 (149 aa).

It belongs to the bacterial ribosomal protein bL9 family.

Binds to the 23S rRNA. This is Large ribosomal subunit protein bL9 from Vibrio vulnificus (strain CMCP6).